The sequence spans 193 residues: Xanthine phosphoribosyltransferase (193 aa).

Xanthine is bound by residues L20 and N27. 128–132 (ASGGT) is a 5-phospho-alpha-D-ribose 1-diphosphate binding site. K156 contributes to the xanthine binding site.

The protein belongs to the purine/pyrimidine phosphoribosyltransferase family. Xpt subfamily. In terms of assembly, homodimer.

The protein resides in the cytoplasm. The catalysed reaction is XMP + diphosphate = xanthine + 5-phospho-alpha-D-ribose 1-diphosphate. It participates in purine metabolism; XMP biosynthesis via salvage pathway; XMP from xanthine: step 1/1. In terms of biological role, converts the preformed base xanthine, a product of nucleic acid breakdown, to xanthosine 5'-monophosphate (XMP), so it can be reused for RNA or DNA synthesis. The chain is Xanthine phosphoribosyltransferase from Deinococcus deserti (strain DSM 17065 / CIP 109153 / LMG 22923 / VCD115).